Consider the following 799-residue polypeptide: Protein translocase subunit SecA 1 (799 aa).

ATP-binding positions include Gln-85, 103–107 (GEGKT), and Asp-504.

The protein belongs to the SecA family. Monomer and homodimer. Part of the essential Sec protein translocation apparatus which comprises SecA, SecYEG and auxiliary proteins SecDF. Other proteins may also be involved.

The protein resides in the cell membrane. The protein localises to the cytoplasm. The enzyme catalyses ATP + H2O + cellular proteinSide 1 = ADP + phosphate + cellular proteinSide 2.. Part of the Sec protein translocase complex. Interacts with the SecYEG preprotein conducting channel. Has a central role in coupling the hydrolysis of ATP to the transfer of proteins into and across the cell membrane, serving as an ATP-driven molecular motor driving the stepwise translocation of polypeptide chains across the membrane. This Lactobacillus johnsonii (strain CNCM I-12250 / La1 / NCC 533) protein is Protein translocase subunit SecA 1.